The sequence spans 132 residues: MVTNTSGKKKTAVARATVSDGEGRVRINSQPVELVEPEMARLKMLEPFRISGSDLRGDVDIDIDVAGGGFAGQADAVRTAIARGLVEHYGDAELRDAFREFDRSLLVNDVRQRESKKWGGPGARARYQKSYR.

Belongs to the universal ribosomal protein uS9 family.

In Halobacterium salinarum (strain ATCC 700922 / JCM 11081 / NRC-1) (Halobacterium halobium), this protein is Small ribosomal subunit protein uS9 (rps9).